A 385-amino-acid chain; its full sequence is MTEGVEGRSQERSDLAGFAARSAESRGRKYQEAFRDHRPAFERDRDRIIHCAAFRRLEYKTQVFVNHEGDYYRTRLTHSLEVAQIGKAIARRLGVNEELTEALALAHDLGHTPFGHTGEEVLNRLMEGFGGFEHNLQSFRVVDQLEERYPGFNGLNLSWEVLEGIVKHSSPYDRPVGVIDRFLPGVVPTIEAQIINYADEIAYNNHDIDDGLKSGFITLDQLDGVELWREVHEGIARAYPDIDPERRKLQTISALIGVFIKDLTTTSLENVQRLRITSLDDLRRINRPVVAFSPATAEKNRKLKGFLFENLYRHYRVERMRVKAERYLRQLFESYVKHPTLLPRKYQKKMEILGRERVVCDYIAGMTDRFALDEFKRLFEPYERV.

A compositionally biased stretch (basic and acidic residues) spans 1–14 (MTEGVEGRSQERSD). Residues 1 to 23 (MTEGVEGRSQERSDLAGFAARSA) are disordered. Residues 75–204 (RLTHSLEVAQ…INYADEIAYN (130 aa)) enclose the HD domain.

Belongs to the dGTPase family. Type 2 subfamily.

The chain is Deoxyguanosinetriphosphate triphosphohydrolase-like protein from Geobacter metallireducens (strain ATCC 53774 / DSM 7210 / GS-15).